Reading from the N-terminus, the 235-residue chain is CMP-N,N'-diacetyllegionaminic acid synthase (235 aa).

This sequence belongs to the CMP-NeuNAc synthase family.

It carries out the reaction N,N-diacetyllegionaminate + CTP = CMP-N,N-diacetyllegionaminate + diphosphate. Functionally, involved in biosynthesis of legionaminic acid (5,7-diamino-3,5,7,9-tetradeoxy-D-glycero-D-galacto-non-2-ulosonic acid)(Leg), a sialic acid-like derivative that is incorporated into flagellin via O-linkage to Ser/Thr. Catalyzes the conversion of N,N'-diacetyllegionaminic acid (Leg5Ac7Ac) and CTP into CMP-N,N'-diacetyllegionaminic acid (CMP-Leg5Ac7Ac). This Campylobacter jejuni subsp. jejuni serotype O:2 (strain ATCC 700819 / NCTC 11168) protein is CMP-N,N'-diacetyllegionaminic acid synthase (legF).